The sequence spans 175 residues: Large ribosomal subunit protein uL10 (175 aa).

Belongs to the universal ribosomal protein uL10 family. As to quaternary structure, part of the ribosomal stalk of the 50S ribosomal subunit. The N-terminus interacts with L11 and the large rRNA to form the base of the stalk. The C-terminus forms an elongated spine to which L12 dimers bind in a sequential fashion forming a multimeric L10(L12)X complex.

Forms part of the ribosomal stalk, playing a central role in the interaction of the ribosome with GTP-bound translation factors. The chain is Large ribosomal subunit protein uL10 from Picosynechococcus sp. (strain ATCC 27264 / PCC 7002 / PR-6) (Agmenellum quadruplicatum).